The chain runs to 434 residues: Histidine--tRNA ligase (434 aa).

The protein belongs to the class-II aminoacyl-tRNA synthetase family. Homodimer.

It is found in the cytoplasm. It catalyses the reaction tRNA(His) + L-histidine + ATP = L-histidyl-tRNA(His) + AMP + diphosphate + H(+). This is Histidine--tRNA ligase from Chlorobium phaeobacteroides (strain BS1).